Here is a 164-residue protein sequence, read N- to C-terminus: C-phycoerythrin alpha chain (164 aa).

2 residues coordinate (2R,3E)-phycoerythrobilin: Cys-82 and Cys-139.

Belongs to the phycobiliprotein family. In terms of assembly, heterodimer of an alpha and a beta chain. Contains two covalently linked bilin chromophores.

The protein resides in the cellular thylakoid membrane. Its function is as follows. Light-harvesting photosynthetic bile pigment-protein from the phycobiliprotein complex. This chain is C-phycoerythrin alpha chain (cpeA), found in Microchaete diplosiphon (Fremyella diplosiphon).